The following is a 60-amino-acid chain: UPF0291 protein Nther_1806 (60 aa).

It belongs to the UPF0291 family.

It localises to the cytoplasm. The sequence is that of UPF0291 protein Nther_1806 from Natranaerobius thermophilus (strain ATCC BAA-1301 / DSM 18059 / JW/NM-WN-LF).